Here is a 139-residue protein sequence, read N- to C-terminus: Small ribosomal subunit protein uS19 (139 aa).

This sequence belongs to the universal ribosomal protein uS19 family.

Functionally, protein S19 forms a complex with S13 that binds strongly to the 16S ribosomal RNA. This chain is Small ribosomal subunit protein uS19, found in Methanoregula boonei (strain DSM 21154 / JCM 14090 / 6A8).